Consider the following 436-residue polypeptide: Trigger factor (436 aa).

The PPIase FKBP-type domain occupies 161-246 (EDQLNIDFVG…VNSVSEPKLP (86 aa)).

It belongs to the FKBP-type PPIase family. Tig subfamily.

It localises to the cytoplasm. The enzyme catalyses [protein]-peptidylproline (omega=180) = [protein]-peptidylproline (omega=0). In terms of biological role, involved in protein export. Acts as a chaperone by maintaining the newly synthesized protein in an open conformation. Functions as a peptidyl-prolyl cis-trans isomerase. This is Trigger factor from Pseudomonas fluorescens (strain SBW25).